The sequence spans 141 residues: Regulator of ribonuclease activity B (141 aa).

The span at 119-132 shows a compositional bias: acidic residues; sequence DEDFDDEDDDEDYD. Positions 119–141 are disordered; it reads DEDFDDEDDDEDYDKDGFPIERH.

This sequence belongs to the RraB family. Interacts with the C-terminal region of Rne.

The protein localises to the cytoplasm. In terms of biological role, globally modulates RNA abundance by binding to RNase E (Rne) and regulating its endonucleolytic activity. Can modulate Rne action in a substrate-dependent manner by altering the composition of the degradosome. This chain is Regulator of ribonuclease activity B, found in Shewanella amazonensis (strain ATCC BAA-1098 / SB2B).